Here is a 165-residue protein sequence, read N- to C-terminus: UPF0303 protein BMA1246 (165 aa).

Belongs to the UPF0303 family.

In Burkholderia mallei (strain ATCC 23344), this protein is UPF0303 protein BMA1246.